The following is a 954-amino-acid chain: Endogenous retrovirus group K member 25 Pol protein (954 aa).

The 189-residue stretch at 57–245 (LEKGHIEPSF…TPFHYLGMQI (189 aa)) folds into the Reverse transcriptase domain. Residues 161-164 (LPQG) carry the LPQG motif. The YXDD signature appears at 195–198 (YIDD). One can recognise an RNase H type-1 domain in the interval 460 to 588 (LENALTVFTD…ADLLVSSALI (129 aa)). Residues D469, E497, D515, and D580 each contribute to the Mg(2+) site. The Integrase-type zinc-finger motif lies at 585–626 (SALIKAQELHALTHVNAAGLKNKFDVTWKLAKDIVQHCTQCQ). Zn(2+)-binding residues include H594, H598, C622, and C625. Residues 640–801 (RGLCPNALWQ…TSAEQHLTGK (162 aa)) form the Integrase catalytic domain. The segment at residues 809–857 (KLIWWKDNKNKTWEIGKVITWGRGFACVSPGENQLPVWIPTRHLKFYNE) is a DNA-binding region (integrase-type). The segment at 862-888 (AKKSTSAETETPQSSTVDSQDEQNGDV) is disordered. Residues 867 to 879 (SAETETPQSSTVD) show a composition bias toward polar residues.

Belongs to the beta type-B retroviral polymerase family. HERV class-II K(HML-2) pol subfamily.

The catalysed reaction is DNA(n) + a 2'-deoxyribonucleoside 5'-triphosphate = DNA(n+1) + diphosphate. It catalyses the reaction Endonucleolytic cleavage to 5'-phosphomonoester.. Its function is as follows. Early post-infection, the reverse transcriptase converts the viral RNA genome into double-stranded viral DNA. The RNase H domain of the reverse transcriptase performs two functions. It degrades the RNA template and specifically removes the RNA primer from the RNA/DNA hybrid. Following nuclear import, the integrase catalyzes the insertion of the linear, double-stranded viral DNA into the host cell chromosome. Endogenous Pol proteins may have kept, lost or modified their original function during evolution. This Homo sapiens (Human) protein is Endogenous retrovirus group K member 25 Pol protein (ERVK-25).